The chain runs to 185 residues: Large ribosomal subunit protein uL5 (185 aa).

This sequence belongs to the universal ribosomal protein uL5 family. In terms of assembly, part of the 50S ribosomal subunit; part of the 5S rRNA/L5/L18/L25 subcomplex. Contacts the 5S rRNA and the P site tRNA. Forms a bridge to the 30S subunit in the 70S ribosome.

This is one of the proteins that bind and probably mediate the attachment of the 5S RNA into the large ribosomal subunit, where it forms part of the central protuberance. In the 70S ribosome it contacts protein S13 of the 30S subunit (bridge B1b), connecting the 2 subunits; this bridge is implicated in subunit movement. Contacts the P site tRNA; the 5S rRNA and some of its associated proteins might help stabilize positioning of ribosome-bound tRNAs. The sequence is that of Large ribosomal subunit protein uL5 from Rhizobium etli (strain CIAT 652).